The chain runs to 581 residues: 2-succinyl-5-enolpyruvyl-6-hydroxy-3-cyclohexene-1-carboxylate synthase (581 aa).

This sequence belongs to the TPP enzyme family. MenD subfamily. In terms of assembly, homodimer. It depends on Mg(2+) as a cofactor. Mn(2+) serves as cofactor. Requires thiamine diphosphate as cofactor.

It catalyses the reaction isochorismate + 2-oxoglutarate + H(+) = 5-enolpyruvoyl-6-hydroxy-2-succinyl-cyclohex-3-ene-1-carboxylate + CO2. It participates in quinol/quinone metabolism; 1,4-dihydroxy-2-naphthoate biosynthesis; 1,4-dihydroxy-2-naphthoate from chorismate: step 2/7. The protein operates within quinol/quinone metabolism; menaquinone biosynthesis. In terms of biological role, catalyzes the thiamine diphosphate-dependent decarboxylation of 2-oxoglutarate and the subsequent addition of the resulting succinic semialdehyde-thiamine pyrophosphate anion to isochorismate to yield 2-succinyl-5-enolpyruvyl-6-hydroxy-3-cyclohexene-1-carboxylate (SEPHCHC). This chain is 2-succinyl-5-enolpyruvyl-6-hydroxy-3-cyclohexene-1-carboxylate synthase, found in Psychromonas ingrahamii (strain DSM 17664 / CCUG 51855 / 37).